The chain runs to 218 residues: Phosphatidylserine decarboxylase proenzyme (218 aa).

Residue serine 182 is the Schiff-base intermediate with substrate; via pyruvic acid of the active site. Serine 182 carries the pyruvic acid (Ser); by autocatalysis modification.

It belongs to the phosphatidylserine decarboxylase family. PSD-A subfamily. In terms of assembly, heterodimer of a large membrane-associated beta subunit and a small pyruvoyl-containing alpha subunit. Pyruvate is required as a cofactor. In terms of processing, is synthesized initially as an inactive proenzyme. Formation of the active enzyme involves a self-maturation process in which the active site pyruvoyl group is generated from an internal serine residue via an autocatalytic post-translational modification. Two non-identical subunits are generated from the proenzyme in this reaction, and the pyruvate is formed at the N-terminus of the alpha chain, which is derived from the carboxyl end of the proenzyme. The post-translation cleavage follows an unusual pathway, termed non-hydrolytic serinolysis, in which the side chain hydroxyl group of the serine supplies its oxygen atom to form the C-terminus of the beta chain, while the remainder of the serine residue undergoes an oxidative deamination to produce ammonia and the pyruvoyl prosthetic group on the alpha chain.

The protein resides in the cell membrane. It carries out the reaction a 1,2-diacyl-sn-glycero-3-phospho-L-serine + H(+) = a 1,2-diacyl-sn-glycero-3-phosphoethanolamine + CO2. It participates in phospholipid metabolism; phosphatidylethanolamine biosynthesis; phosphatidylethanolamine from CDP-diacylglycerol: step 2/2. Catalyzes the formation of phosphatidylethanolamine (PtdEtn) from phosphatidylserine (PtdSer). This chain is Phosphatidylserine decarboxylase proenzyme, found in Oleidesulfovibrio alaskensis (strain ATCC BAA-1058 / DSM 17464 / G20) (Desulfovibrio alaskensis).